The following is a 217-amino-acid chain: Oxygen-insensitive NAD(P)H nitroreductase (217 aa).

10–14 (RYSTK) is an FMN binding site. Lys-14, Thr-41, Asn-71, Lys-74, and Arg-107 together coordinate NAD(+). An FMN-binding site is contributed by Asn-71. Residues 165–166 (EG) and 205–207 (KSR) each bind FMN.

The protein belongs to the nitroreductase family. As to quaternary structure, homodimer. FMN is required as a cofactor.

Its function is as follows. Reduction of a variety of nitroaromatic compounds using NADH (and to lesser extent NADPH) as source of reducing equivalents; two electrons are transferred. Capable of reducing nitrofurazone. This Salmonella typhimurium (strain LT2 / SGSC1412 / ATCC 700720) protein is Oxygen-insensitive NAD(P)H nitroreductase.